A 581-amino-acid chain; its full sequence is Transcription factor GTE2 (581 aa).

The tract at residues 130–153 (VKKTKTKKKKIGHGQKRSNPFATD) is disordered. Residues 131–145 (KKTKTKKKKIGHGQK) are compositionally biased toward basic residues. In terms of domain architecture, Bromo spans 169–275 (KVLKSMMTTC…SQFDVWFNPT (107 aa)). Disordered stretches follow at residues 329 to 399 (PLLP…KREM) and 470 to 581 (KRQG…KEAP). Residues 346-365 (PSPPPSPVQPPPPPSPPPQP) show a composition bias toward pro residues. The NET domain maps to 389–470 (PKAKDPNKRE…NYRKMASKIK (82 aa)). 2 stretches are compositionally biased toward basic and acidic residues: residues 390-399 (KAKDPNKREM) and 493-503 (SAEKRGRKGGE). Residues 504–517 (AGEEDVDIGEDIPV) show a composition bias toward acidic residues. Over residues 530–564 (TAAAASGGSSSSGSFSSSGSSSSSDSESGSSSGSD) the composition is skewed to low complexity.

The protein resides in the nucleus. The polypeptide is Transcription factor GTE2 (GTE2) (Arabidopsis thaliana (Mouse-ear cress)).